The chain runs to 505 residues: MRWLYSTSHKDIGLLYLVFAFFGGLLGTSLSMLIRYELALPGRGLLDGNGQLYNVIITGHGIIMLLFMVMPALFGGFGNWLLPIMIGAPDMAFPRLNNISFWLNPPALALLLLSTLVEQGPGTGWTAYPPLSVQHSGTSVDLAILSLHLNGLSSILGAVNMLVTVAGLRAPGMKLLHMPLFVWAIALTAVLVILAVPVLAAALVMLLTDRNINTAYFCESGDLILYQHLFWFFGHPEVYILILPAFGIVSQVVSFFSQKPVFGLTGMICAMGAISLLGFIVWAHHMFTVGLDLDTVAYFTSATMIIAVPTGMKIFSWMATIYSGRVWFTTPMWFAVGFICLFTLGGVTGVVLANAGVDMLVHDTYYVVAHFHYVLSMGAVFGIFAGVYFWGNLITGLGYHEGRAMVHFWLLFIGVNLTFFPQHFLGLAGMPRRMFDYADCFAGWNAVSSFGASISFISVIVFATTFQEAVRTVPRTATTLEWVLLATPAHHALSQVPVLRTASSH.

A helical membrane pass occupies residues 14–34 (LLYLVFAFFGGLLGTSLSMLI). Residues glutamate 37 and glycine 42 each contribute to the Ca(2+) site. Transmembrane regions (helical) follow at residues 55-75 (VIIT…ALFG), 98-118 (NISF…TLVE), 143-163 (AILS…NMLV), 180-200 (LFVW…PVLA), 229-249 (LFWF…FGIV), and 261-281 (VFGL…GFIV). Fe(II)-heme a is bound at residue histidine 60. Residues histidine 235 and tyrosine 239 each coordinate Cu cation. The segment at residues 235 to 239 (HPEVY) is a cross-link (1'-histidyl-3'-tyrosine (His-Tyr)). Position 239 (tyrosine 239) interacts with O2. Residues histidine 284 and histidine 285 each coordinate Cu cation. 2 helical membrane-spanning segments follow: residues 302–322 (ATMI…ATIY) and 332–352 (MWFA…GVVL). The Mg(2+) site is built by histidine 362 and aspartate 363. Histidine 370 lines the heme a3 pocket. Residue histidine 372 coordinates Fe(II)-heme a. The next 3 membrane-spanning stretches (helical) occupy residues 374-394 (VLSM…GNLI), 408-428 (FWLL…LGLA), and 446-466 (AVSS…ATTF).

This sequence belongs to the heme-copper respiratory oxidase family. As to quaternary structure, component of the cytochrome c oxidase (complex IV, CIV), a multisubunit enzyme composed of a catalytic core of 3 subunits and several supernumerary subunits. The complex exists as a monomer or a dimer and forms supercomplexes (SCs) in the inner mitochondrial membrane with ubiquinol-cytochrome c oxidoreductase (cytochrome b-c1 complex, complex III, CIII). The cofactor is heme. Cu cation is required as a cofactor.

It is found in the mitochondrion inner membrane. The catalysed reaction is 4 Fe(II)-[cytochrome c] + O2 + 8 H(+)(in) = 4 Fe(III)-[cytochrome c] + 2 H2O + 4 H(+)(out). It functions in the pathway energy metabolism; oxidative phosphorylation. Its function is as follows. Component of the cytochrome c oxidase, the last enzyme in the mitochondrial electron transport chain which drives oxidative phosphorylation. The respiratory chain contains 3 multisubunit complexes succinate dehydrogenase (complex II, CII), ubiquinol-cytochrome c oxidoreductase (cytochrome b-c1 complex, complex III, CIII) and cytochrome c oxidase (complex IV, CIV), that cooperate to transfer electrons derived from NADH and succinate to molecular oxygen, creating an electrochemical gradient over the inner membrane that drives transmembrane transport and the ATP synthase. Cytochrome c oxidase is the component of the respiratory chain that catalyzes the reduction of oxygen to water. Electrons originating from reduced cytochrome c in the intermembrane space (IMS) are transferred via the dinuclear copper A center (CU(A)) of subunit 2 and heme A of subunit 1 to the active site in subunit 1, a binuclear center (BNC) formed by heme A3 and copper B (CU(B)). The BNC reduces molecular oxygen to 2 water molecules using 4 electrons from cytochrome c in the IMS and 4 protons from the mitochondrial matrix. In Chlamydomonas reinhardtii (Chlamydomonas smithii), this protein is Cytochrome c oxidase subunit 1 (COX1).